Consider the following 420-residue polypeptide: Tryptophan--tRNA ligase (420 aa).

Positions 72–80 (PSGLPHFGH) match the 'HIGH' region motif. Positions 308 to 312 (KMSSS) match the 'KMSKS' region motif.

It belongs to the class-I aminoacyl-tRNA synthetase family.

Its subcellular location is the cytoplasm. The enzyme catalyses tRNA(Trp) + L-tryptophan + ATP = L-tryptophyl-tRNA(Trp) + AMP + diphosphate + H(+). In Archaeoglobus fulgidus (strain ATCC 49558 / DSM 4304 / JCM 9628 / NBRC 100126 / VC-16), this protein is Tryptophan--tRNA ligase.